The primary structure comprises 101 residues: Large ribosomal subunit protein bL21 (101 aa).

Belongs to the bacterial ribosomal protein bL21 family. Part of the 50S ribosomal subunit. Contacts protein L20.

Its function is as follows. This protein binds to 23S rRNA in the presence of protein L20. The chain is Large ribosomal subunit protein bL21 from Micrococcus luteus (strain ATCC 4698 / DSM 20030 / JCM 1464 / CCM 169 / CCUG 5858 / IAM 1056 / NBRC 3333 / NCIMB 9278 / NCTC 2665 / VKM Ac-2230) (Micrococcus lysodeikticus).